A 375-amino-acid polypeptide reads, in one-letter code: Chaperone protein DnaJ (375 aa).

Residues 5–70 form the J domain; it reads DYYEVLGVER…GKRMAYDQYG (66 aa). The segment at 134–212 adopts a CR-type zinc-finger fold; sequence GTTVTIRVPT…CHGQGRVEEH (79 aa). Positions 147, 150, 164, 167, 186, 189, 200, and 203 each coordinate Zn(2+). CXXCXGXG motif repeat units follow at residues 147-154, 164-171, 186-193, and 200-207; these read CKTCDGSG, CTTCGGIG, CPRCHGSG, and CPDCHGQG.

It belongs to the DnaJ family. As to quaternary structure, homodimer. Zn(2+) serves as cofactor.

The protein resides in the cytoplasm. Functionally, participates actively in the response to hyperosmotic and heat shock by preventing the aggregation of stress-denatured proteins and by disaggregating proteins, also in an autonomous, DnaK-independent fashion. Unfolded proteins bind initially to DnaJ; upon interaction with the DnaJ-bound protein, DnaK hydrolyzes its bound ATP, resulting in the formation of a stable complex. GrpE releases ADP from DnaK; ATP binding to DnaK triggers the release of the substrate protein, thus completing the reaction cycle. Several rounds of ATP-dependent interactions between DnaJ, DnaK and GrpE are required for fully efficient folding. Also involved, together with DnaK and GrpE, in the DNA replication of plasmids through activation of initiation proteins. The chain is Chaperone protein DnaJ from Azotobacter vinelandii (strain DJ / ATCC BAA-1303).